An 83-amino-acid chain; its full sequence is Exodeoxyribonuclease 7 small subunit (83 aa).

It belongs to the XseB family. As to quaternary structure, heterooligomer composed of large and small subunits.

The protein resides in the cytoplasm. It catalyses the reaction Exonucleolytic cleavage in either 5'- to 3'- or 3'- to 5'-direction to yield nucleoside 5'-phosphates.. Its function is as follows. Bidirectionally degrades single-stranded DNA into large acid-insoluble oligonucleotides, which are then degraded further into small acid-soluble oligonucleotides. This Novosphingobium aromaticivorans (strain ATCC 700278 / DSM 12444 / CCUG 56034 / CIP 105152 / NBRC 16084 / F199) protein is Exodeoxyribonuclease 7 small subunit.